Reading from the N-terminus, the 396-residue chain is S-adenosylmethionine synthase (396 aa).

Residue histidine 14 participates in ATP binding. Residue aspartate 16 coordinates Mg(2+). Residue glutamate 42 coordinates K(+). 2 residues coordinate L-methionine: glutamate 55 and glutamine 98. Positions 98–108 (QSPDIAQGVHG) are flexible loop. Residues 167 to 169 (DAK), 234 to 235 (RF), aspartate 243, 249 to 250 (RK), serine 266, and lysine 270 contribute to the ATP site. Aspartate 243 serves as a coordination point for L-methionine. Lysine 274 contacts L-methionine.

Belongs to the AdoMet synthase family. In terms of assembly, homotetramer; dimer of dimers. Requires Mg(2+) as cofactor. It depends on K(+) as a cofactor.

Its subcellular location is the cytoplasm. The catalysed reaction is L-methionine + ATP + H2O = S-adenosyl-L-methionine + phosphate + diphosphate. The protein operates within amino-acid biosynthesis; S-adenosyl-L-methionine biosynthesis; S-adenosyl-L-methionine from L-methionine: step 1/1. Catalyzes the formation of S-adenosylmethionine (AdoMet) from methionine and ATP. The overall synthetic reaction is composed of two sequential steps, AdoMet formation and the subsequent tripolyphosphate hydrolysis which occurs prior to release of AdoMet from the enzyme. The protein is S-adenosylmethionine synthase of Treponema pallidum (strain Nichols).